The chain runs to 697 residues: Elongation factor G (697 aa).

In terms of domain architecture, tr-type G spans 8-282 (EDYRNIGIMA…AVVDYLPSPL (275 aa)). GTP-binding positions include 17-24 (AHIDAGKT), 81-85 (DTPGH), and 135-138 (NKMD).

It belongs to the TRAFAC class translation factor GTPase superfamily. Classic translation factor GTPase family. EF-G/EF-2 subfamily.

The protein resides in the cytoplasm. Its function is as follows. Catalyzes the GTP-dependent ribosomal translocation step during translation elongation. During this step, the ribosome changes from the pre-translocational (PRE) to the post-translocational (POST) state as the newly formed A-site-bound peptidyl-tRNA and P-site-bound deacylated tRNA move to the P and E sites, respectively. Catalyzes the coordinated movement of the two tRNA molecules, the mRNA and conformational changes in the ribosome. This chain is Elongation factor G, found in Mycoplasmopsis agalactiae (strain NCTC 10123 / CIP 59.7 / PG2) (Mycoplasma agalactiae).